A 605-amino-acid polypeptide reads, in one-letter code: UvrABC system protein C (605 aa).

Residues Q14 to I92 form the GIY-YIG domain. The UVR domain maps to K202–I237.

It belongs to the UvrC family. Interacts with UvrB in an incision complex.

The protein resides in the cytoplasm. Functionally, the UvrABC repair system catalyzes the recognition and processing of DNA lesions. UvrC both incises the 5' and 3' sides of the lesion. The N-terminal half is responsible for the 3' incision and the C-terminal half is responsible for the 5' incision. The polypeptide is UvrABC system protein C (Wolbachia pipientis wMel).